A 564-amino-acid chain; its full sequence is Benomyl/methotrexate resistance protein (564 aa).

A disordered region spans residues 60–101 (IDNQGEPNSSQSSSSNNTIVDNNNNNNNDVDGDKIVVTWDGD). Over residues 67–88 (NSSQSSSSNNTIVDNNNNNNND) the composition is skewed to low complexity. 12 consecutive transmembrane segments (helical) span residues 116–136 (AFFI…SAVY), 153–173 (VATL…LVFS), 184–204 (TSIY…TALV), 210–229 (LCIL…ATGG), 241–262 (LPVG…GPFF), 274–294 (WTFW…CFTL), 358–374 (IYIA…FEVF), 393–411 (YMSI…IPVI), 431–451 (IPIA…FGWS), 457–476 (HWVG…FLIF), 489–506 (PHYI…RSVI), and 530–551 (WGSS…LFYL).

It belongs to the major facilitator superfamily. CAR1 family.

It is found in the membrane. In terms of biological role, probable transporter. Confers resistance to benomyl and methotrexate. The polypeptide is Benomyl/methotrexate resistance protein (MDR1) (Candida albicans (Yeast)).